The primary structure comprises 211 residues: HTH-type transcriptional repressor FabR (211 aa).

The 61-residue stretch at 10–70 (RTRRSLIEAA…TMVDESGLML (61 aa)) folds into the HTH tetR-type domain. Residues 33 to 52 (SLREVSREAGIAPTSFYRHF) constitute a DNA-binding region (H-T-H motif).

In terms of assembly, homodimer.

It localises to the cytoplasm. Represses the transcription of fabB, involved in unsaturated fatty acid (UFA) biosynthesis. By controlling UFA production, FabR directly influences the physical properties of the membrane bilayer. This is HTH-type transcriptional repressor FabR from Yersinia pseudotuberculosis serotype O:1b (strain IP 31758).